Reading from the N-terminus, the 92-residue chain is Putative septation protein SpoVG (92 aa).

Belongs to the SpoVG family.

Functionally, could be involved in septation. The sequence is that of Putative septation protein SpoVG from Clostridioides difficile (strain 630) (Peptoclostridium difficile).